A 118-amino-acid polypeptide reads, in one-letter code: UPF0148 protein LS215_1455 (118 aa).

The protein belongs to the UPF0148 family.

The polypeptide is UPF0148 protein LS215_1455 (Saccharolobus islandicus (strain L.S.2.15 / Lassen #1) (Sulfolobus islandicus)).